Consider the following 395-residue polypeptide: 8-amino-7-oxononanoate synthase (395 aa).

K24 contacts substrate. 111 to 112 (GF) contacts pyridoxal 5'-phosphate. Substrate is bound at residue H136. Pyridoxal 5'-phosphate-binding positions include S184, 209-212 (DDAH), and 240-243 (TLSK). K243 is subject to N6-(pyridoxal phosphate)lysine. T357 lines the substrate pocket.

It belongs to the class-II pyridoxal-phosphate-dependent aminotransferase family. BioF subfamily. As to quaternary structure, homodimer. Pyridoxal 5'-phosphate is required as a cofactor.

It catalyses the reaction 6-carboxyhexanoyl-[ACP] + L-alanine + H(+) = (8S)-8-amino-7-oxononanoate + holo-[ACP] + CO2. It participates in cofactor biosynthesis; biotin biosynthesis. In terms of biological role, catalyzes the decarboxylative condensation of pimeloyl-[acyl-carrier protein] and L-alanine to produce 8-amino-7-oxononanoate (AON), [acyl-carrier protein], and carbon dioxide. This Treponema denticola (strain ATCC 35405 / DSM 14222 / CIP 103919 / JCM 8153 / KCTC 15104) protein is 8-amino-7-oxononanoate synthase.